The primary structure comprises 429 residues: Protein cereblon (429 aa).

Residues 1–30 are disordered; sequence MGNHLPLLPAESEEEDEMEVEDQDSKEAKK. A compositionally biased stretch (acidic residues) spans 11–22; it reads ESEEEDEMEVED. S12 bears the Phosphoserine mark. One can recognise a Lon N-terminal domain in the interval 68-306; the sequence is IPVLPQVMMI…CELDIMNKCT (239 aa). Residues 305 to 413 enclose the CULT domain; it reads CTSLCCKQCQ…LTRSALLPTI (109 aa). Zn(2+) is bound by residues C310 and C313. Residues H365, W367, and W373 each contribute to the (S)-thalidomide site. Zn(2+) is bound by residues C378 and C381.

Belongs to the CRBN family. In terms of assembly, component of a DCX (DDB1-CUL4-X-box) protein ligase complex, at least composed of CRBN, CUL4A, DDB1 and RBX1. Interacts directly with DDB1. Interacts with KCNT1. Interacts with ILF2. Interacts with TRAF6 and ECSIT. Post-translationally, ubiquitinated, ubiquitination is mediated by its own DCX protein ligase complex.

It is found in the cytoplasm. The protein resides in the nucleus. Its subcellular location is the membrane. Its pathway is protein modification; protein ubiquitination. Substrate recognition component of a DCX (DDB1-CUL4-X-box) E3 protein ligase complex that mediates the ubiquitination and subsequent proteasomal degradation of target proteins, such as MEIS2, ILF2 or GLUL. Normal degradation of key regulatory proteins is required for normal limb outgrowth and expression of the fibroblast growth factor FGF8. Maintains presynaptic glutamate release and consequently cognitive functions, such as memory and learning, by negatively regulating large-conductance calcium-activated potassium (BK) channels in excitatory neurons. Likely to function by regulating the assembly and neuronal surface expression of BK channels via its interaction with KCNT1. May also be involved in regulating anxiety-like behaviors via a BK channel-independent mechanism. Plays a negative role in TLR4 signaling by interacting with TRAF6 and ECSIT, leading to inhibition of ECSIT ubiquitination, an important step of the signaling. The protein is Protein cereblon (CRBN) of Pongo abelii (Sumatran orangutan).